The primary structure comprises 546 residues: Hydroxylamine reductase (546 aa).

The [4Fe-4S] cluster site is built by cysteine 3, cysteine 6, cysteine 18, and cysteine 25. 8 residues coordinate hybrid [4Fe-2O-2S] cluster: histidine 245, glutamate 269, cysteine 313, cysteine 401, cysteine 429, cysteine 454, glutamate 488, and lysine 490. Cysteine 401 bears the Cysteine persulfide mark.

Belongs to the HCP family. [4Fe-4S] cluster serves as cofactor. The cofactor is hybrid [4Fe-2O-2S] cluster.

It is found in the cytoplasm. It carries out the reaction A + NH4(+) + H2O = hydroxylamine + AH2 + H(+). With respect to regulation, inhibited by cyanide and by sulfide and iron reagents such as dithioerythritol, 2,2'-dipyridyl and o-phenanthroline. In terms of biological role, could be involved in assimilation and/or detoxification of hydroxylamine, which is a toxic compound that may be formed during nitrate/nitrite assimilation. Catalyzes the reduction of hydroxylamine to form NH(3) and H(2)O. It has a low reductase activity with FAD, FMN, benzyl viologen and bromphenol blue as electrons donors, but it is not able to use NAD or NADP. This is Hydroxylamine reductase from Rhodobacter capsulatus (Rhodopseudomonas capsulata).